Here is a 515-residue protein sequence, read N- to C-terminus: Tyrosine decarboxylase 1 (515 aa).

2 consecutive repeat copies span residues Asp-81–Glu-138 and Val-141–Gln-192. The 2 X approximate tandem repeats stretch occupies residues Asp-81–Gln-192. Residue Ala-105 coordinates substrate. Pyridoxal 5'-phosphate is bound by residues Thr-169 and Cys-170. Residue His-205 coordinates substrate. 2 residues coordinate pyridoxal 5'-phosphate: Thr-264 and Asn-318. Lys-321 carries the N6-(pyridoxal phosphate)lysine modification.

This sequence belongs to the group II decarboxylase family. The cofactor is pyridoxal 5'-phosphate. As to expression, mostly expressed in bulbs, and, to a lower extent, in stems, roots, leaves and flowers.

It carries out the reaction L-tyrosine + H(+) = tyramine + CO2. It participates in alkaloid biosynthesis. Catalyzes the decarboxylation of L-tyrosine to tyramine, which is converted to norbelladine, a precursor to all Amaryllidaceae alkaloids such as galanthamine, lycorine and haemanthamine, and including haemanthamine- and crinamine-type alkaloids, promising anticancer agents. This is Tyrosine decarboxylase 1 from Narcissus pseudonarcissus (Daffodil).